The chain runs to 100 residues: Large ribosomal subunit protein bL27 (100 aa).

Residues 1–13 (MNKLYWLTDLQLF) constitute a propeptide that is removed on maturation. A compositionally biased stretch (basic and acidic residues) spans 18–29 (GVDSSKNGRDSN). Residues 18–39 (GVDSSKNGRDSNPKYLGAKLGD) form a disordered region.

The protein belongs to the bacterial ribosomal protein bL27 family. Post-translationally, the N-terminus is cleaved by ribosomal processing cysteine protease Prp.

The polypeptide is Large ribosomal subunit protein bL27 (Ureaplasma urealyticum serovar 10 (strain ATCC 33699 / Western)).